The chain runs to 504 residues: Aspartyl/glutamyl-tRNA(Asn/Gln) amidotransferase subunit B (504 aa).

The protein belongs to the GatB/GatE family. GatB subfamily. As to quaternary structure, heterotrimer of A, B and C subunits.

The catalysed reaction is L-glutamyl-tRNA(Gln) + L-glutamine + ATP + H2O = L-glutaminyl-tRNA(Gln) + L-glutamate + ADP + phosphate + H(+). It catalyses the reaction L-aspartyl-tRNA(Asn) + L-glutamine + ATP + H2O = L-asparaginyl-tRNA(Asn) + L-glutamate + ADP + phosphate + 2 H(+). Allows the formation of correctly charged Asn-tRNA(Asn) or Gln-tRNA(Gln) through the transamidation of misacylated Asp-tRNA(Asn) or Glu-tRNA(Gln) in organisms which lack either or both of asparaginyl-tRNA or glutaminyl-tRNA synthetases. The reaction takes place in the presence of glutamine and ATP through an activated phospho-Asp-tRNA(Asn) or phospho-Glu-tRNA(Gln). The polypeptide is Aspartyl/glutamyl-tRNA(Asn/Gln) amidotransferase subunit B (Tropheryma whipplei (strain Twist) (Whipple's bacillus)).